The chain runs to 384 residues: Erythronate-4-phosphate dehydrogenase (384 aa).

2 residues coordinate substrate: serine 45 and threonine 66. The NAD(+) site is built by aspartate 147 and threonine 177. The active site involves arginine 210. Aspartate 234 is an NAD(+) binding site. The active site involves glutamate 239. The active-site Proton donor is the histidine 256. Glycine 259 is an NAD(+) binding site. Tyrosine 260 lines the substrate pocket.

Belongs to the D-isomer specific 2-hydroxyacid dehydrogenase family. PdxB subfamily. Homodimer.

It is found in the cytoplasm. The enzyme catalyses 4-phospho-D-erythronate + NAD(+) = (R)-3-hydroxy-2-oxo-4-phosphooxybutanoate + NADH + H(+). It functions in the pathway cofactor biosynthesis; pyridoxine 5'-phosphate biosynthesis; pyridoxine 5'-phosphate from D-erythrose 4-phosphate: step 2/5. In terms of biological role, catalyzes the oxidation of erythronate-4-phosphate to 3-hydroxy-2-oxo-4-phosphonooxybutanoate. This is Erythronate-4-phosphate dehydrogenase from Marinobacter nauticus (strain ATCC 700491 / DSM 11845 / VT8) (Marinobacter aquaeolei).